A 264-amino-acid chain; its full sequence is DNA-directed RNA polymerase subunit Rpo3 (264 aa).

[3Fe-4S] cluster contacts are provided by Cys-203, Cys-206, and Cys-209.

The protein belongs to the archaeal Rpo3/eukaryotic RPB3 RNA polymerase subunit family. As to quaternary structure, part of the RNA polymerase complex. The cofactor is [3Fe-4S] cluster.

It is found in the cytoplasm. It carries out the reaction RNA(n) + a ribonucleoside 5'-triphosphate = RNA(n+1) + diphosphate. Functionally, DNA-dependent RNA polymerase (RNAP) catalyzes the transcription of DNA into RNA using the four ribonucleoside triphosphates as substrates. The chain is DNA-directed RNA polymerase subunit Rpo3 from Methanothermobacter thermautotrophicus (strain ATCC 29096 / DSM 1053 / JCM 10044 / NBRC 100330 / Delta H) (Methanobacterium thermoautotrophicum).